The sequence spans 512 residues: Circadian clock oscillator protein KaiC (512 aa).

KaiC domains follow at residues Met1 to Phe243 and Val257 to Asp512. Residues Gly45, Thr46, Gly47, Lys48, Thr49, Ser85, Lys220, Leu221, Arg222, Thr224, His226, Thr286, Gly287, Thr288, Gly289, Lys290, Thr291, and Leu292 each contribute to the ATP site. A Mg(2+)-binding site is contributed by Thr49. Residue Thr291 participates in Mg(2+) binding. Glu314 contributes to the Mg(2+) binding site. Trp327 contributes to the ATP binding site. Ser427 is modified (phosphoserine; by autocatalysis). Thr428 carries the post-translational modification Phosphothreonine; by autocatalysis. Arg447, Lys453, Met454, Arg455, Ser457, His459, and Lys461 together coordinate ATP.

The protein belongs to the KaiC family. Homohexamer; hexamerization is dependent on ATP-binding. The KaiABC complex composition changes during the circadian cycle to control KaiC phosphorylation. Complexes KaiC(6), KaiA(2-4):KaiC(6), KaiB(6):KaiC(6) and KaiC(6):KaiB(6):KaiA(12) are among the most important forms, many form cooperatively. KaiC interacts with SasA, activating its autokinase function and leading to RpaA activation. The cofactor is Mg(2+). Post-translationally, phosphorylated on serine and threonine residues by autocatalysis. Has a 4 step phosphorylation cycle; the autokinase acts first on Thr-428, then Ser-427. When Ser-427 is modified KaiC switches to an autophosphatase mode, acting first on phospho-Thr-428 then phospho-Ser-427.

It catalyses the reaction L-seryl-[protein] + ATP = O-phospho-L-seryl-[protein] + ADP + H(+). The catalysed reaction is L-threonyl-[protein] + ATP = O-phospho-L-threonyl-[protein] + ADP + H(+). The enzyme catalyses ATP + H2O = ADP + phosphate + H(+). The interaction with KaiA enhances its phosphorylation status, while the interaction with KaiB decreases it. Its function is as follows. Central component of the KaiABC oscillator complex, which constitutes the main circadian regulator in cyanobacteria. Complex composition changes during the circadian cycle to control KaiC phosphorylation. KaiA stimulates KaiC autophosphorylation, while KaiB sequesters KaiA, leading to KaiC autodephosphorylation. Clock output pathways impact the RpaA transcriptional regulator. KaiC enhances the autophosphorylation activity of SasA, which then transfers its phosphate group to RpaA to activate it. KaiB and KaiC together enhance the phospho-RpaA dephosphatase activity of CikA. In terms of biological role, has a weak, temperature-independent ATPase activity; ATPase activity defines the circadian period. The phosphorylation state of KaiC modulates its ATPase activity and effects KaiB binding. This is Circadian clock oscillator protein KaiC from Parasynechococcus marenigrum (strain WH8102).